We begin with the raw amino-acid sequence, 358 residues long: MGDWSFLGEFLEEVHKHSTVIGKVWLTVLFIFRMLVLGTAAESSWGDEQADFQCDTMQPGCGNVCYDQAFPISHIRYWVLQIIFVSTPSLVYMGHAMHTVRMQEKRKLREAERAKEARGAGSYEYPVAEKAELSCWEEVNGRIVLQGTLLNTYVCSILIRTTMEVAFIVGQYLLYGIFLDTLHVCRRSPCPHPVNCYVSRPTEKNVFIVFMLAVAALSLFLSLAELYHLGWKKLRQRFVKSGQGMAECQLPGPSAGIVQNCTPPPDFNQCLENGPGGKFFNPFSNKMASQQNTDNLATEQVQGQEPIPGEGFIHIRYAQKPEVPNGASPGHRLPHGYQSDKRRLSKASSKARSDDLSV.

Over 1 to 19 (MGDWSFLGEFLEEVHKHST) the chain is Cytoplasmic. A helical transmembrane segment spans residues 20-40 (VIGKVWLTVLFIFRMLVLGTA). Over 41 to 76 (AESSWGDEQADFQCDTMQPGCGNVCYDQAFPISHIR) the chain is Extracellular. The helical transmembrane segment at 77 to 97 (YWVLQIIFVSTPSLVYMGHAM) threads the bilayer. Topologically, residues 98–164 (HTVRMQEKRK…CSILIRTTME (67 aa)) are cytoplasmic. Residues 165 to 185 (VAFIVGQYLLYGIFLDTLHVC) traverse the membrane as a helical segment. Residues 186–205 (RRSPCPHPVNCYVSRPTEKN) lie on the Extracellular side of the membrane. A helical transmembrane segment spans residues 206 to 226 (VFIVFMLAVAALSLFLSLAEL). Topologically, residues 227-358 (YHLGWKKLRQ…SKARSDDLSV (132 aa)) are cytoplasmic. Positions 318 to 358 (AQKPEVPNGASPGHRLPHGYQSDKRRLSKASSKARSDDLSV) are disordered. 2 positions are modified to phosphoserine: Ser353 and Ser357.

Belongs to the connexin family. Alpha-type (group II) subfamily. A connexon is composed of a hexamer of connexins.

It localises to the cell membrane. The protein localises to the cell junction. The protein resides in the gap junction. One gap junction consists of a cluster of closely packed pairs of transmembrane channels, the connexons, through which materials of low MW diffuse from one cell to a neighboring cell. This chain is Gap junction alpha-5 protein (GJA5), found in Canis lupus familiaris (Dog).